Consider the following 469-residue polypeptide: MFRGRVRHVHFVGIGGVGMSGLAEILRSLEFEVSGSDLKESSTTRRLTSLGVRIDIGHRAENVRGVDVVVYSSAIRPENPELTEARALGTPVIGRAEMLAELMRVKYGVAIAGSHGKTTTTSLVATVLRAAGLDPTVVVGGKMAALGTNARLGAGDLLVAEADESDGSFLRLTPTIAVVTNIDPEHLDHYGTHERIKDAFVEFAARVPFYGLAVLCLDHPHVQDLLPRIPRRHVTYGVSPQSDYSARGIQFRGLETSFNAYRRGEPLGGFTVKMPGAHNVLNCLATIAVADELEVPLDVTKQALATFGGVARRFTVVGSIGGVTMIDDYGHHPAEIRATIDAARRAFPGEDHRVVVAFQPHRHTRTRDLFDEFTRAFNQADVLLVTDIYAAGEPPIPGVTAERLVQSIREHGHHDARFIADKTDLPEALEKIARPGDVVIALGAGDVNACVRGLKARLEAKSPPQEGSS.

113 to 119 is an ATP binding site; the sequence is GSHGKTT.

The protein belongs to the MurCDEF family.

Its subcellular location is the cytoplasm. The catalysed reaction is UDP-N-acetyl-alpha-D-muramate + L-alanine + ATP = UDP-N-acetyl-alpha-D-muramoyl-L-alanine + ADP + phosphate + H(+). It functions in the pathway cell wall biogenesis; peptidoglycan biosynthesis. In terms of biological role, cell wall formation. In Sorangium cellulosum (strain So ce56) (Polyangium cellulosum (strain So ce56)), this protein is UDP-N-acetylmuramate--L-alanine ligase.